A 279-amino-acid polypeptide reads, in one-letter code: Energy-coupling factor transporter ATP-binding protein EcfA (279 aa).

The region spanning Val-4 to Arg-239 is the ABC transporter domain. Gly-37 to Ser-44 contacts ATP.

It belongs to the ABC transporter superfamily. Energy-coupling factor EcfA family. In terms of assembly, forms a stable energy-coupling factor (ECF) transporter complex composed of 2 membrane-embedded substrate-binding proteins (S component), 2 ATP-binding proteins (A component) and 2 transmembrane proteins (T component).

It localises to the cell membrane. Its function is as follows. ATP-binding (A) component of a common energy-coupling factor (ECF) ABC-transporter complex. Unlike classic ABC transporters this ECF transporter provides the energy necessary to transport a number of different substrates. This chain is Energy-coupling factor transporter ATP-binding protein EcfA, found in Methanocaldococcus jannaschii (strain ATCC 43067 / DSM 2661 / JAL-1 / JCM 10045 / NBRC 100440) (Methanococcus jannaschii).